The following is a 1093-amino-acid chain: Carbamoyl phosphate synthase large chain (1093 aa).

A carboxyphosphate synthetic domain region spans residues 1–412 (MPRRNDIRKI…SLMKALRSLE (412 aa)). Positions 139, 179, 185, 186, 218, 220, 225, 251, 252, 253, 295, and 309 each coordinate ATP. The 196-residue stretch at 143 to 338 (KDAMTRIGLD…IAKIAAKLAV (196 aa)) folds into the ATP-grasp 1 domain. 3 residues coordinate Mg(2+): Gln-295, Glu-309, and Asn-311. Mn(2+)-binding residues include Gln-295, Glu-309, and Asn-311. Positions 413 to 560 (TGKRVGAEVL…YSSYEEEDEA (148 aa)) are oligomerization domain. A carbamoyl phosphate synthetic domain region spans residues 561-952 (PQTDKRKVII…AFAKAQLSAG (392 aa)). An ATP-grasp 2 domain is found at 689–880 (GKLLEQLQIP…LAKIASRLMT (192 aa)). Positions 725, 764, 766, 771, 796, 797, 798, 799, 839, and 851 each coordinate ATP. Residues Gln-839, Glu-851, and Asn-853 each coordinate Mg(2+). Positions 839, 851, and 853 each coordinate Mn(2+). Residues 953-1093 (LILPSSGTVF…QLLHAGHAVK (141 aa)) form the MGS-like domain. An allosteric domain region spans residues 953–1093 (LILPSSGTVF…QLLHAGHAVK (141 aa)).

The protein belongs to the CarB family. As to quaternary structure, composed of two chains; the small (or glutamine) chain promotes the hydrolysis of glutamine to ammonia, which is used by the large (or ammonia) chain to synthesize carbamoyl phosphate. Tetramer of heterodimers (alpha,beta)4. It depends on Mg(2+) as a cofactor. Mn(2+) serves as cofactor.

The catalysed reaction is hydrogencarbonate + L-glutamine + 2 ATP + H2O = carbamoyl phosphate + L-glutamate + 2 ADP + phosphate + 2 H(+). It catalyses the reaction hydrogencarbonate + NH4(+) + 2 ATP = carbamoyl phosphate + 2 ADP + phosphate + 2 H(+). The protein operates within amino-acid biosynthesis; L-arginine biosynthesis; carbamoyl phosphate from bicarbonate: step 1/1. It functions in the pathway pyrimidine metabolism; UMP biosynthesis via de novo pathway; (S)-dihydroorotate from bicarbonate: step 1/3. Large subunit of the glutamine-dependent carbamoyl phosphate synthetase (CPSase). CPSase catalyzes the formation of carbamoyl phosphate from the ammonia moiety of glutamine, carbonate, and phosphate donated by ATP, constituting the first step of 2 biosynthetic pathways, one leading to arginine and/or urea and the other to pyrimidine nucleotides. The large subunit (synthetase) binds the substrates ammonia (free or transferred from glutamine from the small subunit), hydrogencarbonate and ATP and carries out an ATP-coupled ligase reaction, activating hydrogencarbonate by forming carboxy phosphate which reacts with ammonia to form carbamoyl phosphate. This Acidobacterium capsulatum (strain ATCC 51196 / DSM 11244 / BCRC 80197 / JCM 7670 / NBRC 15755 / NCIMB 13165 / 161) protein is Carbamoyl phosphate synthase large chain.